We begin with the raw amino-acid sequence, 1012 residues long: Structural polyprotein (1012 aa).

Position 30 (D30) interacts with a divalent metal cation. The Peptidase S50 domain occupies 513–755; sequence ADKGYEVVAN…AGRQYHLAMA (243 aa). Residue S652 is the Nucleophile of the active site. K692 is a catalytic residue. The interval 970–1012 is disordered; the sequence is MEMKHRNPRRAPPKPKPKPNAPSQRPPGRLGRWIRTVSDEDLE. The segment covering 975–986 has biased composition (basic residues); sequence RNPRRAPPKPKP. The segment at 1003-1012 is interaction with VP1 protein; that stretch reads IRTVSDEDLE.

Homotrimer. A central divalent metal stabilizes the VP2 trimer. Interacts with host ITGA4/ITGB1. In terms of assembly, homodimer. Interacts (via C-terminus) with VP1 in the cytoplasm. Interacts with VP2. In terms of processing, specific enzymatic cleavages yield mature proteins. The capsid assembly seems to be regulated by polyprotein processing. The protease VP4 cleaves itself off the polyprotein, thus releasing pre-VP2 and VP3 within the infected cell. During capsid assembly, the C-terminus of pre-VP2 is further processed by VP4, giving rise to VP2, the external capsid protein and three small peptides that all stay closely associated with the capsid.

It localises to the virion. The protein localises to the host cytoplasm. In terms of biological role, capsid protein VP2 self assembles to form an icosahedral capsid with a T=13 symmetry, about 70 nm in diameter, and consisting of 260 VP2 trimers. The capsid encapsulates the genomic dsRNA. VP2 is also involved in attachment and entry into the host cell by interacting with host ITGA4/ITGB1. Functionally, the precursor of VP2 plays an important role in capsid assembly. First, pre-VP2 and VP2 oligomers assemble to form a procapsid. Then, the pre-VP2 intermediates may be processed into VP2 proteins by proteolytic cleavage mediated by VP4 to obtain the mature virion. The final capsid is composed of pentamers and hexamers but VP2 has a natural tendency to assemble into all-pentameric structures. Therefore pre-VP2 may be required to allow formation of the hexameric structures. Protease VP4 is a serine protease that cleaves the polyprotein into its final products. Pre-VP2 is first partially cleaved, and may be completely processed by VP4 upon capsid maturation. Its function is as follows. Capsid protein VP3 plays a key role in virion assembly by providing a scaffold for the capsid made of VP2. May self-assemble to form a T=4-like icosahedral inner-capsid composed of at least 180 trimers. Plays a role in genomic RNA packaging by recruiting VP1 into the capsid and interacting with the dsRNA genome segments to form a ribonucleoprotein complex. Additionally, the interaction of the VP3 C-terminal tail with VP1 removes the inherent structural blockade of the polymerase active site. Thus, VP3 can also function as a transcriptional activator. In terms of biological role, structural peptide 1 is a small peptide derived from pre-VP2 C-terminus. It destabilizes and perforates cell membranes, suggesting a role during entry. Functionally, structural peptide 2 is a small peptide derived from pVP2 C-terminus. It is not essential for the virus viability, but viral growth is affected when missing. Structural peptide 3 is a small peptide derived from pVP2 C-terminus. It is not essential for the virus viability, but viral growth is affected when missing. Its function is as follows. Structural peptide 4 is a small peptide derived from pVP2 C-terminus. It is essential for the virus viability. The protein is Structural polyprotein of Avian infectious bursal disease virus (strain Australian 002-73) (IBDV).